The sequence spans 257 residues: Thiazole synthase (257 aa).

The active-site Schiff-base intermediate with DXP is the Lys-97. 1-deoxy-D-xylulose 5-phosphate contacts are provided by residues Gly-158, 184-185, and 206-207; these read AG and NT.

Belongs to the ThiG family. In terms of assembly, homotetramer. Forms heterodimers with either ThiH or ThiS.

It localises to the cytoplasm. The catalysed reaction is [ThiS sulfur-carrier protein]-C-terminal-Gly-aminoethanethioate + 2-iminoacetate + 1-deoxy-D-xylulose 5-phosphate = [ThiS sulfur-carrier protein]-C-terminal Gly-Gly + 2-[(2R,5Z)-2-carboxy-4-methylthiazol-5(2H)-ylidene]ethyl phosphate + 2 H2O + H(+). The protein operates within cofactor biosynthesis; thiamine diphosphate biosynthesis. In terms of biological role, catalyzes the rearrangement of 1-deoxy-D-xylulose 5-phosphate (DXP) to produce the thiazole phosphate moiety of thiamine. Sulfur is provided by the thiocarboxylate moiety of the carrier protein ThiS. In vitro, sulfur can be provided by H(2)S. This is Thiazole synthase from Desulforamulus reducens (strain ATCC BAA-1160 / DSM 100696 / MI-1) (Desulfotomaculum reducens).